Here is a 1365-residue protein sequence, read N- to C-terminus: Serine-aspartate repeat-containing protein D (1365 aa).

Residues 1-35 (MLNRENKTAITRKGMVSNRLNKFSIRKYTVGTASI) form the signal peptide. The short motif at 23–34 (FSIRKYTVGTAS) is the YSIRK-G/S signaling motif element. A ligand binding A region region spans residues 36-568 (LVGTTLIFGL…NNQSGGAGQE (533 aa)). The tract at residues 54 to 185 (ESTNKELNEA…NKKVDAKTES (132 aa)) is disordered. Composition is skewed to polar residues over residues 62–71 (EATTSASDNQ) and 94–109 (EMVSSQGNETTSNGNK). The segment covering 130–145 (KSDEQASPKSTNEDLN) has biased composition (basic and acidic residues). 2 stretches are compositionally biased toward polar residues: residues 146-155 (TKQTISNQEA) and 163-173 (NKSVVNAQPTN). A compositionally biased stretch (basic and acidic residues) spans 174-183 (EENKKVDAKT). CNA-B domains lie at 569 to 680 (VYKI…IYKP), 681 to 791 (KYNL…YKTP), 792 to 901 (KYNL…FYKP), 902 to 1012 (TYNL…YKTP), and 1013 to 1123 (KYSL…EEDT). Disordered regions lie at residues 857-884 (ETPSGYTPTQVGSGTDEGIDSNGTSTTG), 972-991 (YTPTSVTSGNDTEKDSNGLT), and 1078-1341 (EKPA…SNNA). 2 stretches are compositionally biased toward polar residues: residues 860 to 869 (SGYTPTQVGS) and 972 to 981 (YTPTSVTSGN). Acidic residues-rich tracts occupy residues 1091–1101 (TEDDKDADGGE) and 1118–1304 (YFEE…DSDS). The short motif at 1328 to 1332 (LPETG) is the LPXTG sorting signal element. T1331 carries the post-translational modification Pentaglycyl murein peptidoglycan amidated threonine. A propeptide spans 1332 to 1365 (GNENSGSNNATLFGGLFAALGSLLLFGRRKKQNK) (removed by sortase).

This sequence belongs to the serine-aspartate repeat-containing protein (SDr) family. In terms of assembly, interacts with host DSG1; this interaction increases S.aureus adherence to keratinocytes.

Its subcellular location is the secreted. The protein resides in the cell wall. Its function is as follows. Cell surface-associated calcium-binding protein which plays an important role in adhesion and pathogenesis. Mediates interactions with components of the extracellular matrix such as host DSG1 to promote bacterial adhesion to host cells. Contributes to the resistance to killing by innate immune components such as neutrophils present in blood and thus attenuates bacterial clearance. In Staphylococcus aureus (strain MSSA476), this protein is Serine-aspartate repeat-containing protein D (sdrD).